The chain runs to 611 residues: Threonine--tRNA ligase (611 aa).

Residues 209–502 (DHRRLGKDLE…MTENYAGDFP (294 aa)) are catalytic. 3 residues coordinate Zn(2+): Cys-302, His-353, and His-479.

Belongs to the class-II aminoacyl-tRNA synthetase family. Homodimer. The cofactor is Zn(2+).

It is found in the cytoplasm. It catalyses the reaction tRNA(Thr) + L-threonine + ATP = L-threonyl-tRNA(Thr) + AMP + diphosphate + H(+). Catalyzes the attachment of threonine to tRNA(Thr) in a two-step reaction: L-threonine is first activated by ATP to form Thr-AMP and then transferred to the acceptor end of tRNA(Thr). Also edits incorrectly charged L-seryl-tRNA(Thr). The sequence is that of Threonine--tRNA ligase from Synechococcus sp. (strain CC9902).